The sequence spans 473 residues: H(+)/Cl(-) exchange transporter ClcA (473 aa).

Residues Met-1 to Pro-32 are Cytoplasmic-facing. A helical transmembrane segment spans residues Leu-33 to Val-69. Over His-70–Pro-76 the chain is Periplasmic. A helical transmembrane segment spans residues Leu-77–Tyr-100. Residues Gly-106 to Pro-110 carry the Selectivity filter part_1 motif. Chloride is bound at residue Ser-107. Positions Ile-109 to Leu-116 form an intramembrane region, helical. At Glu-117–Arg-123 the chain is on the cytoplasmic side. A run of 2 helical transmembrane segments spans residues Trp-124–Gly-141 and Glu-148–Phe-166. A Selectivity filter part_2 motif is present at residues Gly-146–Pro-150. The Cytoplasmic segment spans residues Arg-167–Thr-176. Intramembrane regions (helical) lie at residues Leu-177 to Ala-189 and Pro-193 to Ile-201. The Cytoplasmic segment spans residues Glu-202–Ser-214. Residues Ile-215 to Phe-232 traverse the membrane as a helical segment. Residues Asn-233–Leu-252 lie on the Periplasmic side of the membrane. A helical membrane pass occupies residues Trp-253 to His-281. Residues Arg-282 to Asn-287 lie on the Cytoplasmic side of the membrane. The chain crosses the membrane as a helical span at residues Ile-288 to Ala-309. Residues Pro-310–Ser-329 lie on the Periplasmic side of the membrane. 2 consecutive transmembrane segments (helical) span residues Met-330 to Ser-349 and Gly-355 to Val-376. The Selectivity filter part_3 motif lies at Gly-355–Pro-359. Chloride is bound by residues Ile-356 and Phe-357. Topologically, residues Glu-377 to Ala-386 are periplasmic. An intramembrane region (helical) is located at residues Gly-387–Ser-401. Residues Ile-402–Ala-404 constitute an intramembrane region (note=Loop between two helices). Positions Pro-405 to Thr-416 form an intramembrane region, helical. An intramembrane region (note=Loop between two helices) is located at residues Asp-417–Leu-421. The chain crosses the membrane as a helical span at residues Ile-422–Phe-438. The Cytoplasmic segment spans residues Thr-439–Thr-473. Chloride is bound at residue Tyr-445.

The protein belongs to the chloride channel (TC 2.A.49) family. ClcA subfamily. Homodimer.

Its subcellular location is the cell inner membrane. It catalyses the reaction 2 chloride(in) + H(+)(out) = 2 chloride(out) + H(+)(in). Functionally, proton-coupled chloride transporter. Functions as antiport system and exchanges two chloride ions for 1 proton. Probably acts as an electrical shunt for an outwardly-directed proton pump that is linked to amino acid decarboxylation, as part of the extreme acid resistance (XAR) response. The sequence is that of H(+)/Cl(-) exchange transporter ClcA from Shigella boydii serotype 4 (strain Sb227).